The following is a 307-amino-acid chain: Alpha N-terminal protein methyltransferase 1 (307 aa).

Low complexity predominate over residues 38 to 51; sequence EPAPAPAAGSNGVA. Residues 38-60 are disordered; sequence EPAPAPAAGSNGVAGEEEAGGGG. Residues Gly123, Arg128, 145–147, 179–180, and Gln195 each bind S-adenosyl-L-methionine; these read EPV and LQ.

It belongs to the methyltransferase superfamily. NTM1 family.

The enzyme catalyses N-terminal L-alanyl-L-prolyl-L-lysyl-[protein] + 3 S-adenosyl-L-methionine = N-terminal N,N,N-trimethyl-L-alanyl-L-prolyl-L-lysyl-[protein] + 3 S-adenosyl-L-homocysteine + 3 H(+). The catalysed reaction is N-terminal L-seryl-L-prolyl-L-lysyl-[protein] + 3 S-adenosyl-L-methionine = N-terminal N,N,N-trimethyl-L-seryl-L-prolyl-L-lysyl-[protein] + 3 S-adenosyl-L-homocysteine + 3 H(+). It carries out the reaction N-terminal L-prolyl-L-prolyl-L-lysyl-[protein] + 2 S-adenosyl-L-methionine = N-terminal N,N-dimethyl-L-prolyl-L-prolyl-L-lysyl-[protein] + 2 S-adenosyl-L-homocysteine + 2 H(+). Alpha-N-methyltransferase that methylates the N-terminus of target proteins containing the N-terminal motif [Ala/Pro/Ser]-Pro-Lys when the initiator Met is cleaved. Specifically catalyzes mono-, di- or tri-methylation of exposed alpha-amino group of Ala or Ser residue in the [Ala/Ser]-Pro-Lys motif and mono- or di-methylation of Pro in the Pro-Pro-Lys motif. The sequence is that of Alpha N-terminal protein methyltransferase 1 from Oryza sativa subsp. japonica (Rice).